The primary structure comprises 31 residues: Putative translational regulatory protein ArgL (31 aa).

In terms of biological role, may serve a regulatory role in expression of downstream gene argF; in an argL-argF-lacZ fusion mutation of the start codon to a stop codon in argL increases expression of beta-galactosidase. This is Putative translational regulatory protein ArgL from Escherichia coli (strain K12).